Consider the following 248-residue polypeptide: ATP synthase subunit a, chloroplastic (248 aa).

The next 5 helical transmembrane spans lie at 37–57 (GQVLITSWVVIGILLTVAFLG), 96–116 (VPFVGTLFLFIFVSNWSGALV), 135–155 (INTTVALALLTSGAYFYAGFH), 200–220 (LVVAVLVSLVPLVVPIPMMFL), and 221–241 (GLFTSGIQALIFATLAAAYIG).

It belongs to the ATPase A chain family. F-type ATPases have 2 components, CF(1) - the catalytic core - and CF(0) - the membrane proton channel. CF(1) has five subunits: alpha(3), beta(3), gamma(1), delta(1), epsilon(1). CF(0) has four main subunits: a, b, b' and c.

It is found in the plastid. The protein resides in the chloroplast thylakoid membrane. In terms of biological role, key component of the proton channel; it plays a direct role in the translocation of protons across the membrane. In Staurastrum punctulatum (Green alga), this protein is ATP synthase subunit a, chloroplastic.